The following is a 186-amino-acid chain: Calcium-binding protein NCSA (186 aa).

4 consecutive EF-hand domains span residues 40 to 58 (SGTI…MGVG), 66 to 93 (LFNV…ITRG), 94 to 129 (TPEE…MYKL), and 142 to 177 (DPHD…NPDI). Residues Asp-107, Asp-109, Asn-111, Tyr-113, Glu-118, Asp-155, Asp-157, Asp-159, Tyr-161, and Glu-166 each contribute to the Ca(2+) site.

The protein belongs to the recoverin family.

In terms of biological role, may prevent cells from entering development prematurely in the presence of environmental nutrients. This Dictyostelium discoideum (Social amoeba) protein is Calcium-binding protein NCSA (ncsA).